We begin with the raw amino-acid sequence, 413 residues long: Cardiolipin synthase B (413 aa).

PLD phosphodiesterase domains follow at residues 108 to 135 (VFRR…SAEH) and 285 to 312 (RRRP…DPLS). Active-site residues include histidine 113, lysine 115, aspartate 120, histidine 290, lysine 292, and aspartate 297. Residues 390-413 (VDPPAQPTMETQDRVETENTGVKP) are disordered.

The protein belongs to the phospholipase D family. Cardiolipin synthase subfamily. ClsB sub-subfamily.

It localises to the cell membrane. It carries out the reaction 2 a 1,2-diacyl-sn-glycero-3-phospho-(1'-sn-glycerol) = a cardiolipin + glycerol. Its function is as follows. Catalyzes the phosphatidyl group transfer from one phosphatidylglycerol molecule to another to form cardiolipin (CL) (diphosphatidylglycerol) and glycerol. This Escherichia coli O157:H7 protein is Cardiolipin synthase B.